Consider the following 220-residue polypeptide: UPF0502 protein VV2_0756 (220 aa).

This sequence belongs to the UPF0502 family.

This chain is UPF0502 protein VV2_0756, found in Vibrio vulnificus (strain CMCP6).